The sequence spans 169 residues: E1B protein, small T-antigen (169 aa).

Belongs to the adenoviridae E1B 19 kDa protein family.

This Canine adenovirus serotype 1 (strain CLL) (CAdV-1) protein is E1B protein, small T-antigen.